A 57-amino-acid polypeptide reads, in one-letter code: Toxin GhoT (57 aa).

2 helical membrane-spanning segments follow: residues 7 to 27 and 37 to 57; these read ILIF…FISH and AFLV…FSLF.

This sequence belongs to the GhoT/OrtT toxin family.

The protein resides in the cell inner membrane. Functionally, toxic component of a type V toxin-antitoxin (TA) system. Causes membrane damage when induced by MqsR, slowing cell growth and leading to the formation of dormant persister cells; involved with GhoS, its antitoxin, in reducing cell growth during antibacterial stress. Its toxic effects are neutralized by GhoS, which digests ghoT transcripts in a sequence-specific manner. This Escherichia coli O157:H7 protein is Toxin GhoT.